Here is a 587-residue protein sequence, read N- to C-terminus: Transport inhibitor response 1-like protein Os05g0150500 (587 aa).

Residues 6 to 63 (SRAACAAAAPPWHSLPDEVWEHAFSFLPAAADRGAAAGACSSWLRAERRSRRRLAVAN) enclose the F-box domain. Lys-85 is a 1D-myo-inositol hexakisphosphate binding site. The interval 92–93 (DF) is interaction with auxin-responsive proteins. 1D-myo-inositol hexakisphosphate is bound by residues 124–125 (KR) and Arg-355. Residues 358 to 363 (PSDPFG) are interaction with auxin-responsive proteins. A 1D-myo-inositol hexakisphosphate-binding site is contributed by 409-411 (CFR). The tract at residues 413–417 (CILEP) is interaction with auxin-responsive proteins. Position 444 (Arg-444) interacts with 1D-myo-inositol hexakisphosphate. The tract at residues 472-473 (AF) is interaction with auxin-responsive proteins. 1D-myo-inositol hexakisphosphate is bound by residues 492–493 (KK) and Arg-517.

In terms of assembly, part of a SCF (SKP1-cullin-F-box) protein ligase complex. May interact with auxin and auxin-responsive proteins.

It is found in the nucleus. Its pathway is protein modification; protein ubiquitination. The protein is Transport inhibitor response 1-like protein Os05g0150500 of Oryza sativa subsp. japonica (Rice).